A 296-amino-acid polypeptide reads, in one-letter code: Tuberculosinyl adenosine transferase (296 aa).

This sequence belongs to the diterpene synthase family. Homodimer. The cofactor is Mg(2+).

The enzyme catalyses tuberculosinyl diphosphate + adenosine + H(+) = 1-tuberculosinyladenosine + diphosphate. It carries out the reaction tuberculosinyl diphosphate + H2O = tuberculosinol + diphosphate. It catalyses the reaction tuberculosinyl diphosphate + H2O = (13R)-edaxadiene + diphosphate. The catalysed reaction is tuberculosinyl diphosphate + H2O = (13S)-edaxadiene + diphosphate. Functionally, tuberculosinyl transferase that catalyzes the condensation of adenosine and tuberculosinyl diphosphate (TbPP) to generate 1-tuberculosinyladenosine (1-TbAd), which acts as an antiacid that directly protects M.tuberculosis from acid pH and physically remodels M.tuberculosis phagolysosomes. In addition, acts as a phosphatase that catalyzes the diphosphate-removal from TbPP to produce both tuberculosinol (TOH) and isotuberculosinol (iso-TOH). The polypeptide is Tuberculosinyl adenosine transferase (Mycobacterium tuberculosis (strain CDC 1551 / Oshkosh)).